Consider the following 115-residue polypeptide: Large ribosomal subunit protein uL22 (115 aa).

The protein belongs to the universal ribosomal protein uL22 family. As to quaternary structure, part of the 50S ribosomal subunit.

In terms of biological role, this protein binds specifically to 23S rRNA; its binding is stimulated by other ribosomal proteins, e.g. L4, L17, and L20. It is important during the early stages of 50S assembly. It makes multiple contacts with different domains of the 23S rRNA in the assembled 50S subunit and ribosome. The globular domain of the protein is located near the polypeptide exit tunnel on the outside of the subunit, while an extended beta-hairpin is found that lines the wall of the exit tunnel in the center of the 70S ribosome. The sequence is that of Large ribosomal subunit protein uL22 from Endomicrobium trichonymphae.